We begin with the raw amino-acid sequence, 346 residues long: GTP-binding RHO-like protein (346 aa).

The segment covering 1-10 (MTPNGSRRHS) has biased composition (basic residues). Positions 1–25 (MTPNGSRRHSAYMGSPRSQHSSTME) are disordered. A compositionally biased stretch (polar residues) spans 16–25 (PRSQHSSTME). 82–89 (GDGGCGKT) serves as a coordination point for GTP. Residues 104–112 (YVPTVFENY) carry the Effector region motif. Residues 130–134 (DTAGQ) and 188–191 (TKSD) each bind GTP. The interval 259-294 (LGGSNGGSGNHSRHHSRNYSNVSNNRRGHLKNTSYD) is disordered. A Cysteine methyl ester modification is found at C343. The S-geranylgeranyl cysteine moiety is linked to residue C343. A propeptide spans 344 to 346 (VIL) (removed in mature form).

The protein belongs to the small GTPase superfamily. Rho family.

It localises to the cell membrane. This Candida albicans (strain WO-1) (Yeast) protein is GTP-binding RHO-like protein (CRL1).